We begin with the raw amino-acid sequence, 358 residues long: Na(+)/H(+) exchange regulatory cofactor NHE-RF1 (358 aa).

N-acetylserine is present on serine 2. 2 positions are modified to phosphoserine: serine 2 and serine 46. In terms of domain architecture, PDZ 1 spans 14–94 (LCCLEKGPNG…AVRLLVVDPD (81 aa)). A compositionally biased stretch (low complexity) spans 114 to 134 (QAGPEQAGPPAAPGEQGPAGE). The interval 114 to 151 (QAGPEQAGPPAAPGEQGPAGENEPREVEKSHPERRELR) is disordered. Over residues 135-151 (NEPREVEKSHPERRELR) the composition is skewed to basic and acidic residues. The region spanning 154-234 (LCAMKKGPNG…EAKLLVVDKE (81 aa)) is the PDZ 2 domain. The disordered stretch occupies residues 247–358 (SSEHLNGPLP…SEKKELFSNL (112 aa)). The segment covering 272-290 (LAPAASESPRPALARSASS) has biased composition (low complexity). 3 positions are modified to phosphoserine: serine 279, serine 289, and serine 290. Phosphothreonine is present on threonine 292. Phosphoserine occurs at positions 293, 298, and 301. A compositionally biased stretch (low complexity) spans 308–327 (TAPSSTSSSSDPILDFSISL). Over residues 348–358 (WSEKKELFSNL) the composition is skewed to basic and acidic residues.

As to quaternary structure, homodimer, and heterodimer with NHERF2. Binds the N-termini of EZR, RDX and MSN. Binds the C-termini of PDGFRA, PDGFRB, ADRB2, NOS2 and CFTR. Binds ARHGAP17, EPI64, RACK1, OPRK1, GNAQ, CTNNB1 and PLCB3. Binds PDZK1. Interacts with CLCN3. Binds the C-terminus of PAG1. In resting T-cells, part of a PAG1-NHERF1-MSN complex which is disrupted upon TCR activation. Forms a complex with CFTR and SLC4A7. Forms a complex with SLC4A7 and ATP6V1B1. Interacts with TRPC4 (via the PDZ-binding domain). Directly interacts with HTR4. Interacts (via the PDZ 1 domain) with PODXL (via the C-terminal PDZ-binding motif DTHL); interaction is not detected in glomerular epithelium cells. Interacts (via the PDZ 1 domain) with PODXL (via the C-terminal PDZ-binding motif DTHL); the interaction take place early in the secretory pathway and is necessary for its apical membrane sorting. Interacts with SLC26A3. Interacts with MCC. Interacts with SLC34A1. Interacts (via the PDZ domains) with SLC26A6 isoform 4 and isoform 5. Interacts (via PDZ domains) with ACE2 (via PDZ-binding motif); the interaction may enhance ACE2 membrane residence. Post-translationally, phosphorylated on serine residues. Detected in ileum, duodenum and in kidney, where it is found in the glomerulus, the proximal tubule, the thick ascending limb of Henle's loop and the cortical collecting duct.

It is found in the cytoplasm. Its subcellular location is the apical cell membrane. It localises to the cell projection. The protein localises to the filopodium. The protein resides in the ruffle. It is found in the microvillus. Its subcellular location is the endomembrane system. In terms of biological role, scaffold protein that connects plasma membrane proteins with members of the ezrin/moesin/radixin family and thereby helps to link them to the actin cytoskeleton and to regulate their surface expression. Necessary for recycling of internalized ADRB2. Was first known to play a role in the regulation of the activity and subcellular location of SLC9A3. Necessary for cAMP-mediated phosphorylation and inhibition of SLC9A3. Involved in sperm capacitation. May participate in the regulation of the chloride and bicarbonate homeostasis in spermatozoa. May enhance Wnt signaling. May participate in HTR4 targeting to microvilli. Involved in the regulation of phosphate reabsorption in the renal proximal tubules. This chain is Na(+)/H(+) exchange regulatory cofactor NHE-RF1 (NHERF1), found in Oryctolagus cuniculus (Rabbit).